A 173-amino-acid chain; its full sequence is Inorganic pyrophosphatase (173 aa).

Substrate is bound by residues K26, R40, and Y52. The Mg(2+) site is built by D62, D67, and D99. Y138 provides a ligand contact to substrate.

Belongs to the PPase family. Homohexamer. It depends on Mg(2+) as a cofactor.

It localises to the cytoplasm. The catalysed reaction is diphosphate + H2O = 2 phosphate + H(+). Functionally, catalyzes the hydrolysis of inorganic pyrophosphate (PPi) forming two phosphate ions. The polypeptide is Inorganic pyrophosphatase (Sulfolobus acidocaldarius (strain ATCC 33909 / DSM 639 / JCM 8929 / NBRC 15157 / NCIMB 11770)).